The sequence spans 309 residues: NAD kinase (309 aa).

The active-site Proton acceptor is the Asp89. NAD(+)-binding positions include 89-90 (DG), 163-164 (NE), His174, Arg191, Asp193, and 204-209 (TAYSLS).

Belongs to the NAD kinase family. A divalent metal cation serves as cofactor.

The protein resides in the cytoplasm. It catalyses the reaction NAD(+) + ATP = ADP + NADP(+) + H(+). In terms of biological role, involved in the regulation of the intracellular balance of NAD and NADP, and is a key enzyme in the biosynthesis of NADP. Catalyzes specifically the phosphorylation on 2'-hydroxyl of the adenosine moiety of NAD to yield NADP. This chain is NAD kinase, found in Shewanella frigidimarina (strain NCIMB 400).